A 229-amino-acid chain; its full sequence is Cytidylate kinase (229 aa).

Residue 12-20 (GPSGSGKGT) participates in ATP binding.

It belongs to the cytidylate kinase family. Type 1 subfamily.

The protein localises to the cytoplasm. The catalysed reaction is CMP + ATP = CDP + ADP. It carries out the reaction dCMP + ATP = dCDP + ADP. This is Cytidylate kinase from Stutzerimonas stutzeri (strain A1501) (Pseudomonas stutzeri).